The following is a 424-amino-acid chain: UPF0597 protein Sputw3181_2955 (424 aa).

It belongs to the UPF0597 family.

The chain is UPF0597 protein Sputw3181_2955 from Shewanella sp. (strain W3-18-1).